The chain runs to 948 residues: Protocadherin alpha-2 (948 aa).

The signal sequence occupies residues Met-1 to Ala-22. Residues Ala-23 to Asn-697 lie on the Extracellular side of the membrane. Cadherin domains follow at residues Gln-30–Phe-133, Ala-157–Phe-242, Ala-243–Val-350, Ser-351–Phe-455, Ala-456–Leu-565, and Gly-588–Ala-678. 4 N-linked (GlcNAc...) asparagine glycosylation sites follow: Asn-257, Asn-265, Asn-362, and Asn-548. The chain crosses the membrane as a helical span at residues Val-698–Tyr-718. Residues Thr-719–Gln-948 are Cytoplasmic-facing. One copy of the PXXP 1 repeat lies at Pro-734–Pro-737. The tract at residues Pro-734–Pro-892 is 5 X 4 AA repeats of P-X-X-P. 3 disordered regions span residues Arg-754–Asn-801, Gly-829–Pro-854, and Lys-868–Gln-948. The segment covering Ala-783–Gly-795 has biased composition (basic and acidic residues). PXXP repeat units lie at residues Pro-797 to Pro-800, Pro-830 to Pro-833, Pro-871 to Pro-874, and Pro-889 to Pro-892. The span at Asp-907–Lys-921 shows a compositional bias: basic and acidic residues.

Its subcellular location is the cell membrane. Potential calcium-dependent cell-adhesion protein. May be involved in the establishment and maintenance of specific neuronal connections in the brain. The sequence is that of Protocadherin alpha-2 (PCDHA2) from Homo sapiens (Human).